The chain runs to 450 residues: Phosphoglucosamine mutase (450 aa).

S102 serves as the catalytic Phosphoserine intermediate. 4 residues coordinate Mg(2+): S102, D243, D245, and D247. Position 102 is a phosphoserine (S102).

Belongs to the phosphohexose mutase family. It depends on Mg(2+) as a cofactor. Post-translationally, activated by phosphorylation.

It carries out the reaction alpha-D-glucosamine 1-phosphate = D-glucosamine 6-phosphate. Its function is as follows. Catalyzes the conversion of glucosamine-6-phosphate to glucosamine-1-phosphate. The protein is Phosphoglucosamine mutase of Rhizobium rhizogenes (strain K84 / ATCC BAA-868) (Agrobacterium radiobacter).